The chain runs to 197 residues: MAERTACVERNTLETRIKVSVNLDGTGKTRFATGVPFFEHMLDQIARHGLIDLDIECQGDLHIDDHHTVEDVGITLGQAFARAIGDKKGIVRYGHSYVPLDEALSRVVVDFSGRPGLSMQVPYTRARVGSFDVDLFQEFFQGFVNHAQVTLHIDNLRGSNTHHQIETVFKAFGRALRMAVEPDPRMVGQTPSTKGCL.

The protein belongs to the imidazoleglycerol-phosphate dehydratase family.

It localises to the cytoplasm. It catalyses the reaction D-erythro-1-(imidazol-4-yl)glycerol 3-phosphate = 3-(imidazol-4-yl)-2-oxopropyl phosphate + H2O. The protein operates within amino-acid biosynthesis; L-histidine biosynthesis; L-histidine from 5-phospho-alpha-D-ribose 1-diphosphate: step 6/9. This chain is Imidazoleglycerol-phosphate dehydratase, found in Azotobacter vinelandii (strain DJ / ATCC BAA-1303).